The sequence spans 119 residues: Holo-[acyl-carrier-protein] synthase (119 aa).

Asp5 and Glu51 together coordinate Mg(2+).

This sequence belongs to the P-Pant transferase superfamily. AcpS family. Requires Mg(2+) as cofactor.

The protein localises to the cytoplasm. It carries out the reaction apo-[ACP] + CoA = holo-[ACP] + adenosine 3',5'-bisphosphate + H(+). Transfers the 4'-phosphopantetheine moiety from coenzyme A to a Ser of acyl-carrier-protein. This is Holo-[acyl-carrier-protein] synthase from Helicobacter pylori (strain J99 / ATCC 700824) (Campylobacter pylori J99).